The sequence spans 273 residues: Large ribosomal subunit protein uL2 (273 aa).

Positions 228 to 273 are disordered; that stretch reads VDHPHGGGEGKTSGGRHPVTPWGFPTKGKKTRKNKRTSKFIVKKRK. The segment covering 254–273 has biased composition (basic residues); the sequence is KGKKTRKNKRTSKFIVKKRK.

It belongs to the universal ribosomal protein uL2 family. As to quaternary structure, part of the 50S ribosomal subunit. Forms a bridge to the 30S subunit in the 70S ribosome.

Functionally, one of the primary rRNA binding proteins. Required for association of the 30S and 50S subunits to form the 70S ribosome, for tRNA binding and peptide bond formation. It has been suggested to have peptidyltransferase activity; this is somewhat controversial. Makes several contacts with the 16S rRNA in the 70S ribosome. In Rickettsia felis (strain ATCC VR-1525 / URRWXCal2) (Rickettsia azadi), this protein is Large ribosomal subunit protein uL2.